Consider the following 543-residue polypeptide: MGKGQPIEPNIEQSLVDLCKRTVAMNLLHCYPTTTEHELSCEEWGNGTERSQSMAACQGCVELRKEVHDLRTAVNLILPMLPLYPQLPNTFTTAANIAAQPALHQVLQQSLLRRKPTAHTPTVPQPECPGQLRTVLSSPGSALPNVMLMNHLMINGLKPVSPTLPNGHIQPAVGEASMQTDEQQVKWSSPSSVDSNGQKTDSSAASAGDNQNIDVIGDGSESPTSSNHSVQELAMLTSHQNLFNAFKDSQFIFNQVPKQEPVAPLRVAPATNGTTNGATKAAGPERKPRKPVNDDIVKIVRNQDLSEENIATFQIPVPKAHLSDPTFRPVSEQQIIQQIIQGKKYDEMEVGETMIQLCKKLAEKRVFGPRLMSQTTVAGLNHSNYSNLPIKGICYIQHVCRKVLYDKFENEEDFWDKFREAMRKLAARCRRVRHAKKTKHNREEAQAEMLSKRYGEDIPFNLNGSGLIIPKSEPSETPAVNGDINMITMGQIGTLLTQFNADRKTPLTEVLPAELLTTFLSYLNRPKQEVQSPPPAQNPQNPN.

2 disordered regions span residues 165–228 (PNGH…SSNH) and 268–291 (APAT…PRKP). A compositionally biased stretch (polar residues) spans 177 to 213 (SMQTDEQQVKWSSPSSVDSNGQKTDSSAASAGDNQNI). Low complexity predominate over residues 268-282 (APATNGTTNGATKAA).

In terms of processing, cleaved by caspase ced-3 in vitro.

The protein resides in the nucleus. Heterochronic protein which controls the choice of stage specific cell fates. Involved in the temporal progression of vulval fate patterning, possibly by inhibiting lin-12. Acts as a transcription factor involved in the stage-specific repression of insulin/insulin-like growth factor gene ins-33. This Caenorhabditis briggsae protein is Protein lin-14 (lin-14).